The primary structure comprises 360 residues: Mannose-1-phosphate guanylyltransferase catalytic subunit beta (360 aa).

A substrate-binding domain region spans residues 2 to 222 (KALILVGGYG…QGFWMDIGQP (221 aa)). A GDP-alpha-D-mannose-binding site is contributed by D110. A Mg(2+)-binding site is contributed by D110. K162 is an active-site residue. D218 contributes to the GDP-alpha-D-mannose binding site. A Mg(2+)-binding site is contributed by D218. The interval 245 to 360 (CSGPGIVGNV…ESVPEPRIIM (116 aa)) is hexapeptide repeat domain.

Belongs to the transferase hexapeptide repeat family. In terms of assembly, component of the GMPPA-GMPPB mannose-1-phosphate guanylyltransferase complex composed of 4 GMPPA subunits and 8 GMPPB subunits; the complex is organized into three layers, a central layer made up of 2 GMPPA dimers sandwiched between two layers each made up of 2 GMPPB dimers. GMPPB catalytic activity is reduced when part of the complex and binding of GDP-alpha-D-Mannose by GMPPA induces allosteric feedback inhibition of GMPPB. Requires Mg(2+) as cofactor. In terms of tissue distribution, ubiquitously expressed, including in brain and skeletal muscle. Weakly expressed with highest expression in skeletal muscle, brain and gonads.

It localises to the cytoplasm. It carries out the reaction alpha-D-mannose 1-phosphate + GTP + H(+) = GDP-alpha-D-mannose + diphosphate. It functions in the pathway nucleotide-sugar biosynthesis; GDP-alpha-D-mannose biosynthesis; GDP-alpha-D-mannose from alpha-D-mannose 1-phosphate (GTP route): step 1/1. With respect to regulation, enzyme activity is reduced by incorporation into the GMPPA-GMPPB mannose-1-phosphate guanylyltransferase complex. Allosterically inhibited, when part of the GMPPA-GMPPB complex, by GDP-alpha-D-mannose binding to GMPPA. Catalytic subunit of the GMPPA-GMPPB mannose-1-phosphate guanylyltransferase complex. Catalyzes the formation of GDP-mannose, an essential precursor of glycan moieties of glycoproteins and glycolipids. Can catalyze the reverse reaction in vitro. Together with GMPPA regulates GDP-alpha-D-mannose levels. The polypeptide is Mannose-1-phosphate guanylyltransferase catalytic subunit beta (Homo sapiens (Human)).